Reading from the N-terminus, the 37-residue chain is Esculentin-2SE (37 aa).

Cysteine 31 and cysteine 37 form a disulfide bridge.

In terms of tissue distribution, expressed by the skin glands.

Its subcellular location is the secreted. Functionally, mast cell degranulating peptide. Causes histamine release from rat peritoneal mast cells in vitro. Has antibacterial activity against the Gram-negative bacterium E.coli K12 and Gram-positive bacterium M.luteus NCT C2665. The sequence is that of Esculentin-2SE from Lithobates sevosus (Dusky gopher frog).